A 195-amino-acid chain; its full sequence is uncharacterized protein (195 aa).

The first 21 residues, Met1 to Ala21, serve as a signal peptide directing secretion. Residues Asn62 and Asn109 are each glycosylated (N-linked (GlcNAc...) asparagine). The interval Asp119 to His141 is disordered.

It localises to the secreted. This is an uncharacterized protein from Arthroderma benhamiae (strain ATCC MYA-4681 / CBS 112371) (Trichophyton mentagrophytes).